A 400-amino-acid chain; its full sequence is S-adenosylmethionine synthase (400 aa).

An ATP-binding site is contributed by 136–141 (GQGSVD).

It belongs to the AdoMet synthase 2 family. Mg(2+) is required as a cofactor.

The catalysed reaction is L-methionine + ATP + H2O = S-adenosyl-L-methionine + phosphate + diphosphate. It participates in amino-acid biosynthesis; S-adenosyl-L-methionine biosynthesis; S-adenosyl-L-methionine from L-methionine: step 1/1. Catalyzes the formation of S-adenosylmethionine from methionine and ATP. The protein is S-adenosylmethionine synthase (mat) of Thermoplasma acidophilum (strain ATCC 25905 / DSM 1728 / JCM 9062 / NBRC 15155 / AMRC-C165).